The chain runs to 428 residues: Adenylosuccinate synthetase (428 aa).

GTP is bound by residues 11–17 (GDEGKGK) and 39–41 (GHT). D12 serves as the catalytic Proton acceptor. Mg(2+) is bound by residues D12 and G39. IMP-binding positions include 12–15 (DEGK), 37–40 (NAGH), T130, R144, N226, T241, and R305. H40 serves as the catalytic Proton donor. 301-307 (VTTGRKR) contributes to the substrate binding site. Residues R307, 333–335 (KLD), and 415–417 (GTG) contribute to the GTP site.

Belongs to the adenylosuccinate synthetase family. In terms of assembly, homodimer. Mg(2+) serves as cofactor.

Its subcellular location is the cytoplasm. The enzyme catalyses IMP + L-aspartate + GTP = N(6)-(1,2-dicarboxyethyl)-AMP + GDP + phosphate + 2 H(+). It participates in purine metabolism; AMP biosynthesis via de novo pathway; AMP from IMP: step 1/2. Functionally, plays an important role in the de novo pathway and in the salvage pathway of purine nucleotide biosynthesis. Catalyzes the first committed step in the biosynthesis of AMP from IMP. The sequence is that of Adenylosuccinate synthetase from Candida albicans (strain SC5314 / ATCC MYA-2876) (Yeast).